The chain runs to 276 residues: Transmembrane protein 45B (276 aa).

Transmembrane regions (helical) follow at residues 7 to 27 (HALP…KYPL), 48 to 68 (IIEA…EQFV), 95 to 115 (LFFA…HVPL), 147 to 167 (IHSL…VEVV), 181 to 201 (LLLL…PPFG), and 213 to 233 (IMFV…ILAA). Phosphoserine occurs at positions 271 and 273.

This sequence belongs to the TMEM45 family.

It localises to the endosome membrane. The protein localises to the lysosome membrane. The protein resides in the golgi apparatus. Its subcellular location is the trans-Golgi network membrane. In terms of biological role, plays a role in innate immunity. In Bos taurus (Bovine), this protein is Transmembrane protein 45B (TMEM45B).